Here is a 333-residue protein sequence, read N- to C-terminus: Adenosine deaminase (333 aa).

The Zn(2+) site is built by His-12 and His-14. Residues His-14, Asp-16, and Gly-170 each contribute to the substrate site. Position 197 (His-197) interacts with Zn(2+). Glu-200 functions as the Proton donor in the catalytic mechanism. A Zn(2+)-binding site is contributed by Asp-278. Asp-279 is a substrate binding site.

The protein belongs to the metallo-dependent hydrolases superfamily. Adenosine and AMP deaminases family. Adenosine deaminase subfamily. Zn(2+) serves as cofactor.

It catalyses the reaction adenosine + H2O + H(+) = inosine + NH4(+). The enzyme catalyses 2'-deoxyadenosine + H2O + H(+) = 2'-deoxyinosine + NH4(+). Functionally, catalyzes the hydrolytic deamination of adenosine and 2-deoxyadenosine. The sequence is that of Adenosine deaminase from Shigella sonnei (strain Ss046).